We begin with the raw amino-acid sequence, 463 residues long: RuvB-like 2 (463 aa).

The residue at position 2 (Ala2) is an N-acetylalanine. A Glycyl lysine isopeptide (Lys-Gly) (interchain with G-Cter in SUMO2) cross-link involves residue Lys9. Position 77–84 (77–84 (GQPGTGKT)) interacts with ATP. Phosphoserine is present on Ser437. Glycyl lysine isopeptide (Lys-Gly) (interchain with G-Cter in SUMO2) cross-links involve residues Lys444 and Lys456.

It belongs to the RuvB family. Forms homohexameric rings. Can form a dodecamer with RUVBL1 made of two stacked hexameric rings; however, even though RUVBL1 and RUVBL2 are present in equimolar ratio, the oligomeric status of each hexamer is not known. Oligomerization may regulate binding to nucleic acids and conversely, binding to nucleic acids may affect the dodecameric assembly. Interaction of the complex with DHX34 results in conformational changes of the N-terminus of the RUVBL2 subunits, resulting in loss of nucleotide binding ability and ATP hydrolysis of the complex. Interacts with the transcriptional activation domain of MYC. Interacts with ATF2. Component of the RNA polymerase II holoenzyme complex. May also act to bridge the LEF1/TCF1-CTNNB1 complex and TBP. Component of the NuA4 histone acetyltransferase complex which contains the catalytic subunit KAT5/TIP60 and the subunits EP400, TRRAP/PAF400, BRD8/SMAP, EPC1, DMAP1/DNMAP1, RUVBL1/TIP49, RUVBL2, ING3, actin, ACTL6A/BAF53A, MORF4L1/MRG15, MORF4L2/MRGX, MRGBP, YEATS4/GAS41, VPS72/YL1 and MEAF6. The NuA4 complex interacts with MYC and the adenovirus E1A protein. RUVBL2 interacts with EP400. Component of a NuA4-related complex which contains EP400, TRRAP/PAF400, SRCAP, BRD8/SMAP, EPC1, DMAP1/DNMAP1, RUVBL1/TIP49, RUVBL2, actin, ACTL6A/BAF53A, VPS72 and YEATS4/GAS41. Interacts with NPAT. Component of the chromatin-remodeling INO80 complex; specifically part of a complex module associated with the helicase ATP-binding and the helicase C-terminal domain of INO80. Component of some MLL1/MLL complex, at least composed of the core components KMT2A/MLL1, ASH2L, HCFC1/HCF1, WDR5 and RBBP5, as well as the facultative components BACC1, CHD8, E2F6, HSP70, INO80C, KANSL1, LAS1L, MAX, MCRS1, MGA, MYST1/MOF, PELP1, PHF20, PRP31, RING2, RUVB1/TIP49A, RUVB2/TIP49B, SENP3, TAF1, TAF4, TAF6, TAF7, TAF9 and TEX10. Interacts with IGHMBP2. Interacts with TELO2. Interacts with HINT1. Component of a SWR1-like complex. Component of the R2TP complex composed at least of RUVBL1, RUVBL2, RPAP3 and PIHD1. Component of the PAQosome complex which is responsible for the biogenesis of several protein complexes and which consists of R2TP complex members RUVBL1, RUVBL2, RPAP3 and PIH1D1, URI complex members PFDN2, PFDN6, PDRG1, UXT and URI1 as well as ASDURF, POLR2E and DNAAF10/WDR92. Interacts with ITFG1. Interacts with ZMYND10. Interacts with WAC; WAC positively regulates MTOR activity by promoting the assembly of the TTT complex composed of TELO2, TTI1 and TTI2 and the RUVBL complex composed of RUVBL1 and RUVBL2 into the TTT-RUVBL complex which leads to the dimerization of the mTORC1 complex and its subsequent activation. Forms a complex with APPL1 and APPL2. Interacts with ZNHIT2 (via HIT-type zinc finger) in the presence of ATP or ADP; shows a stronger interaction in the presence of ADP. The RUVBL1/RUVBL2 complex interacts with ZNHIT1 (via HIT-type zinc finger), ZNHIT3 (via HIT-type zinc finger), ZNHIT6 (via HIT-type zinc finger) and DDX59/ZNHIT5 (via HIT-type zinc finger) in the presence of ADP. Interacts with NOPCHAP1; the interaction is direct and disrupted upon ATP binding. Interacts with SMG1.

Its subcellular location is the nucleus matrix. The protein resides in the nucleus. It is found in the nucleoplasm. The protein localises to the cytoplasm. It localises to the membrane. Its subcellular location is the dynein axonemal particle. The catalysed reaction is ATP + H2O = ADP + phosphate + H(+). Possesses single-stranded DNA-stimulated ATPase and ATP-dependent DNA helicase (5' to 3') activity; hexamerization is thought to be critical for ATP hydrolysis and adjacent subunits in the ring-like structure contribute to the ATPase activity. Component of the NuA4 histone acetyltransferase complex which is involved in transcriptional activation of select genes principally by acetylation of nucleosomal histones H4 and H2A. This modification may both alter nucleosome-DNA interactions and promote interaction of the modified histones with other proteins which positively regulate transcription. This complex may be required for the activation of transcriptional programs associated with oncogene and proto-oncogene mediated growth induction, tumor suppressor mediated growth arrest and replicative senescence, apoptosis, and DNA repair. The NuA4 complex ATPase and helicase activities seem to be, at least in part, contributed by the association of RUVBL1 and RUVBL2 with EP400. NuA4 may also play a direct role in DNA repair when recruited to sites of DNA damage. Component of a SWR1-like complex that specifically mediates the removal of histone H2A.Z/H2AZ1 from the nucleosome. Proposed core component of the chromatin remodeling INO80 complex which exhibits DNA- and nucleosome-activated ATPase activity and catalyzes ATP-dependent nucleosome sliding. Plays an essential role in oncogenic transformation by MYC and also modulates transcriptional activation by the LEF1/TCF1-CTNNB1 complex. May also inhibit the transcriptional activity of ATF2. Involved in the endoplasmic reticulum (ER)-associated degradation (ERAD) pathway where it negatively regulates expression of ER stress response genes. May play a role in regulating the composition of the U5 snRNP complex. In Mus musculus (Mouse), this protein is RuvB-like 2 (Ruvbl2).